Reading from the N-terminus, the 297-residue chain is Lysenin (297 aa).

Positions Glu10–Ser33 are N-terminal cap domain. A beta-hairpin domain region spans residues Val34–Ile107. The tract at residues Pro108–Ile156 is N-terminal cap domain. Positions Val157–Gly297 are C-terminal receptor-binding domain. The an N-(acyl)-sphingosylphosphocholine site is built by Lys185, Ser227, Tyr233, and Tyr282. A disulfide bridge links Cys272 with Cys283.

It belongs to the lysenin family. Binds to sphingomyelin as a monomer by using its C-terminal domain. Forms a nonamer when sphingomyelin/lysenin ratio is lower than ca 500. Oligomerization, but not binding, is influenced by the fluidity of sphingomyelin. In terms of tissue distribution, expressed by coelomocytes.

The protein localises to the secreted. It localises to the target cell membrane. Pore-forming toxin that defensively acts against parasitic microorganisms by forming pores in sphingomyelin-containing membranes. Has hemolytic activity and is also cytotoxic to spermatozoa of some species of invertebrates and many species of vertebrates and to amphibian larvae, guinea pig polymorphonuclear leukocytes, chicken fibroblasts, normal spleen cells and various tumor cells. Is lethal for various species of reptiles, amphibian, birds and mammals. Induces smooth muscle contraction. It binds sphingomyelin and induces hemolysis in the same manner as lysenin-related protein 2, and is 10-fold more effective than lysenin-related protein 1. In Eisenia fetida (Red wiggler worm), this protein is Lysenin.